A 399-amino-acid polypeptide reads, in one-letter code: 1-deoxy-D-xylulose 5-phosphate reductoisomerase (399 aa).

The NADPH site is built by Thr-10, Gly-11, Ser-12, Ile-13, and Asn-124. A 1-deoxy-D-xylulose 5-phosphate-binding site is contributed by Lys-125. Glu-126 provides a ligand contact to NADPH. Asp-150 is a Mn(2+) binding site. 1-deoxy-D-xylulose 5-phosphate-binding residues include Ser-151, Glu-152, Ser-186, and His-209. Glu-152 serves as a coordination point for Mn(2+). Gly-215 is a binding site for NADPH. 4 residues coordinate 1-deoxy-D-xylulose 5-phosphate: Ser-222, Asn-227, Lys-228, and Glu-231. Glu-231 provides a ligand contact to Mn(2+).

The protein belongs to the DXR family. Mg(2+) is required as a cofactor. Requires Mn(2+) as cofactor.

It carries out the reaction 2-C-methyl-D-erythritol 4-phosphate + NADP(+) = 1-deoxy-D-xylulose 5-phosphate + NADPH + H(+). It functions in the pathway isoprenoid biosynthesis; isopentenyl diphosphate biosynthesis via DXP pathway; isopentenyl diphosphate from 1-deoxy-D-xylulose 5-phosphate: step 1/6. Its function is as follows. Catalyzes the NADPH-dependent rearrangement and reduction of 1-deoxy-D-xylulose-5-phosphate (DXP) to 2-C-methyl-D-erythritol 4-phosphate (MEP). The chain is 1-deoxy-D-xylulose 5-phosphate reductoisomerase from Psychromonas ingrahamii (strain DSM 17664 / CCUG 51855 / 37).